The chain runs to 848 residues: Trimethylamine-N-oxide reductase 1 (848 aa).

The segment at residues 1-39 (MNNNDLFQASRRRFLAQLGGLTVAGMLGTSLLTPRRATA) is a signal peptide (tat-type signal). Serine 191 provides a ligand contact to Mo-bis(molybdopterin guanine dinucleotide).

Belongs to the prokaryotic molybdopterin-containing oxidoreductase family. It depends on Mo-bis(molybdopterin guanine dinucleotide) as a cofactor. Post-translationally, predicted to be exported by the Tat system. The position of the signal peptide cleavage has not been experimentally proven.

Its subcellular location is the periplasm. The catalysed reaction is trimethylamine + 2 Fe(III)-[cytochrome c] + H2O = trimethylamine N-oxide + 2 Fe(II)-[cytochrome c] + 3 H(+). In terms of biological role, reduces trimethylamine-N-oxide (TMAO) into trimethylamine; an anaerobic reaction coupled to energy-yielding reactions. The protein is Trimethylamine-N-oxide reductase 1 (torA) of Escherichia coli O6:H1 (strain CFT073 / ATCC 700928 / UPEC).